The sequence spans 552 residues: Non-structural protein NS1 (552 aa).

The protein is Non-structural protein NS1 (Segment-5) of Bluetongue virus 1 (isolate South Africa) (BTV 1).